The sequence spans 92 residues: UPF0728 protein (92 aa).

Belongs to the UPF0728 family.

This Branchiostoma floridae (Florida lancelet) protein is UPF0728 protein.